Reading from the N-terminus, the 440-residue chain is Asparagine--tRNA ligase (440 aa).

Belongs to the class-II aminoacyl-tRNA synthetase family. As to quaternary structure, homodimer.

The protein localises to the cytoplasm. It carries out the reaction tRNA(Asn) + L-asparagine + ATP = L-asparaginyl-tRNA(Asn) + AMP + diphosphate + H(+). The chain is Asparagine--tRNA ligase from Roseiflexus sp. (strain RS-1).